The chain runs to 412 residues: Pyruvate dehydrogenase E1 component subunit alpha, mitochondrial (412 aa).

Pyruvate is bound by residues His104, Tyr130, Arg131, Ala169, Gly177, Val179, Asp208, Gly209, Ala210, Asn237, and Tyr239. Thiamine diphosphate-binding residues include Tyr130 and Arg131. Gly177, Val179, Asp208, Gly209, Ala210, and Asn237 together coordinate thiamine diphosphate. A Mg(2+)-binding site is contributed by Asp208. Residues Asn237 and Tyr239 each contribute to the Mg(2+) site. A thiamine diphosphate-binding site is contributed by His304.

As to quaternary structure, tetramer of 2 alpha and 2 beta subunits. The cofactor is thiamine diphosphate. Mg(2+) serves as cofactor.

The protein localises to the mitochondrion matrix. It carries out the reaction N(6)-[(R)-lipoyl]-L-lysyl-[protein] + pyruvate + H(+) = N(6)-[(R)-S(8)-acetyldihydrolipoyl]-L-lysyl-[protein] + CO2. With respect to regulation, E1 activity is regulated by phosphorylation (inactivation) and dephosphorylation (activation) of the alpha subunit. In terms of biological role, the pyruvate dehydrogenase complex catalyzes the overall conversion of pyruvate to acetyl-CoA and CO(2). It contains multiple copies of three enzymatic components: pyruvate dehydrogenase (E1), dihydrolipoamide acetyltransferase (E2) and lipoamide dehydrogenase (E3). The polypeptide is Pyruvate dehydrogenase E1 component subunit alpha, mitochondrial (PDA1) (Kluyveromyces lactis (strain ATCC 8585 / CBS 2359 / DSM 70799 / NBRC 1267 / NRRL Y-1140 / WM37) (Yeast)).